Reading from the N-terminus, the 316-residue chain is Putative HTH-type transcriptional regulatory protein PYRAB03670 (316 aa).

In terms of domain architecture, HTH cro/C1-type spans 131–189 (LKDLREKHGYSLSELANILGVSRKSLQRYEKGDSMVTLEVALRLEEVFDEALVKPINVL). The segment at residues 142–161 (LSELANILGVSRKSLQRYEK) is a DNA-binding region (H-T-H motif).

In Pyrococcus abyssi (strain GE5 / Orsay), this protein is Putative HTH-type transcriptional regulatory protein PYRAB03670.